A 20-amino-acid polypeptide reads, in one-letter code: Catechol 1,2-dioxygenase (20 aa).

Belongs to the intradiol ring-cleavage dioxygenase family. In terms of assembly, homodimer which dissociates into active monomeric subunits at high ionic strengths. It depends on Fe(3+) as a cofactor.

The catalysed reaction is catechol + O2 = cis,cis-muconate + 2 H(+). It functions in the pathway aromatic compound metabolism; beta-ketoadipate pathway; 5-oxo-4,5-dihydro-2-furylacetate from catechol: step 1/3. This is Catechol 1,2-dioxygenase from Acinetobacter radioresistens.